The sequence spans 1956 residues: Sodium channel protein type 10 subunit alpha (1956 aa).

Residues 1–125 (MELPFASVGT…FNLIRRTAIK (125 aa)) lie on the Cytoplasmic side of the membrane. The tract at residues 31–54 (HRAAKKARTKHRGQEDKGEKPRPQ) is disordered. Residues 32–41 (RAAKKARTKH) are compositionally biased toward basic residues. The segment covering 42-54 (RGQEDKGEKPRPQ) has biased composition (basic and acidic residues). The I repeat unit spans residues 116-404 (FNLIRRTAIK…VTMAYEEQSQ (289 aa)). Residues 126-149 (VSVHSWFSIFITITILVNCVCMTR) traverse the membrane as a helical segment. The Extracellular portion of the chain corresponds to 150–154 (TDLPE). A helical transmembrane segment spans residues 155–174 (KVEYVFTVIYTFEALIKILA). At 175-187 (RGFCLNEFTYLRD) the chain is on the cytoplasmic side. Residues 188 to 206 (PWNWLDFSVITLAYVGAAI) form a helical membrane-spanning segment. At 207 to 212 (DLRGIS) the chain is on the extracellular side. The helical; Voltage-sensor transmembrane segment at 213-232 (GLRTFRVLRALKTVSVIPGL) threads the bilayer. The Cytoplasmic segment spans residues 233–248 (KVIVGALIHSVRKLAD). The chain crosses the membrane as a helical span at residues 249 to 272 (VTILTVFCLSVFALVGLQLFKGNL). Topologically, residues 273-340 (KNKCIRNGTD…PDFNYTSFDS (68 aa)) are extracellular. Cysteine 276 and cysteine 318 are disulfide-bonded. N-linked (GlcNAc...) asparagine glycosylation is found at asparagine 279, asparagine 288, asparagine 311, and asparagine 334. The pore-forming intramembrane region spans 341-365 (FAWAFLSLFRLMTQDSWERLYQQTL). The Extracellular portion of the chain corresponds to 366–372 (RASGKMY). The helical transmembrane segment at 373 to 398 (MVFFVLVIFLGSFYLVNLILAVVTMA) threads the bilayer. Over 399 to 658 (YEEQSQATIA…KWRKFKMALF (260 aa)) the chain is Cytoplasmic. 4 positions are modified to phosphoserine: serine 440, serine 443, serine 466, and serine 478. Polar residues predominate over residues 441-453 (LQSHSGSPLASKN). Disordered regions lie at residues 441–484 (LQSH…YNQR) and 537–581 (LLGR…AGAP). Residues 475-484 (SPQSDPYNQR) show a composition bias toward polar residues. A phosphoserine mark is found at serine 611 and serine 614. The stretch at 646–910 (CCPKWRKFKM…EDDGEVNNLQ (265 aa)) is one II repeat. The chain crosses the membrane as a helical span at residues 659–683 (ELVTDPFAELTITLCIVVNTVFMAM). At 684–694 (EHYPMTDAFDA) the chain is on the extracellular side. The helical transmembrane segment at 695–718 (MLQAGNIVFTVFFTMEMAFKIIAF) threads the bilayer. Residues 719–726 (DPYYYFQK) lie on the Cytoplasmic side of the membrane. The helical transmembrane segment at 727–746 (KWNIFDCVIVTVSLLELSAS) threads the bilayer. Topologically, residues 747 to 752 (KKGSLS) are extracellular. Residues 753 to 772 (VLRTFRLLRVFKLAKSWPTL) traverse the membrane as a helical; Voltage-sensor segment. Topologically, residues 773–788 (NTLIKIIGNSVGALGN) are cytoplasmic. Residues 789-809 (LTFILAIIVFIFALVGKQLLS) form a helical membrane-spanning segment. At 810 to 833 (EDYGCRKDGVSVWNGEKLRWHMCD) the chain is on the extracellular side. Residues 834–854 (FFHSFLVVFRILCGEWIENMW) constitute an intramembrane region (pore-forming). Residues 855-863 (VCMEVSQKS) lie on the Extracellular side of the membrane. Cysteine 856 and cysteine 865 are joined by a disulfide. A helical transmembrane segment spans residues 864 to 889 (ICLILFLTVMVLGNLVVLNLFIALLL). Residues 890–1148 (NSFSADNLTA…GWQVRKTCYR (259 aa)) are Cytoplasmic-facing. Positions 1008 to 1094 (DELEEDMEQA…SEGSTVDCPD (87 aa)) are disordered. The stretch at 1141-1450 (QVRKTCYRIV…KKYYNAMKKL (310 aa)) is one III repeat. The helical transmembrane segment at 1149 to 1172 (IVEHSWFESFIIFMILLSSGALAF) threads the bilayer. Over 1173-1185 (EDNYLEEKPRVKS) the chain is Extracellular. The chain crosses the membrane as a helical span at residues 1186-1211 (VLEYTDRVFTFIFVFEMLLKWVAYGF). Residues 1212 to 1217 (KKYFTN) are Cytoplasmic-facing. A helical transmembrane segment spans residues 1218-1239 (AWCWLDFLIVNISLTSLIAKIL). Over 1240-1243 (EYSD) the chain is Extracellular. Residues 1244–1265 (VASIKALRTLRALRPLRALSRF) traverse the membrane as a helical; Voltage-sensor segment. Topologically, residues 1266 to 1284 (EGMRVVVDALVGAIPSIMN) are cytoplasmic. The helical transmembrane segment at 1285–1312 (VLLVCLIFWLIFSIMGVNLFAGKFSKCV) threads the bilayer. Over 1313–1354 (DTRNNPFSNVNSTMVNNKSECHNQNSTGHFFWVNVKVNFDNV) the chain is Extracellular. Residues asparagine 1323, asparagine 1329, and asparagine 1337 are each glycosylated (N-linked (GlcNAc...) asparagine). The pore-forming intramembrane region spans 1355 to 1376 (AMGYLALLQVATFKGWMDIMYA). At 1377-1392 (AVDSGEINSQPNWENN) the chain is on the extracellular side. A helical membrane pass occupies residues 1393-1419 (LYMYLYFVVFIIFGGFFTLNLFVGVII). At 1420 to 1472 (DNFNQQKKKLGGQDIFMTEEQKKYYNAMKKLGSKKPQKPIPRPLNKYQGFVFD) the chain is on the cytoplasmic side. At serine 1452 the chain carries Phosphoserine; by PKC. The IV repeat unit spans residues 1459-1758 (IPRPLNKYQG…WEKFDPEATQ (300 aa)). A helical membrane pass occupies residues 1473 to 1496 (IVTRQAFDIIIMVLICLNMITMMV). The Extracellular portion of the chain corresponds to 1497 to 1507 (ETDEQGEEKTK). Residues 1508–1531 (VLGRINQFFVAVFTGECVMKMFAL) form a helical membrane-spanning segment. Residues 1532 to 1537 (RQYYFT) lie on the Cytoplasmic side of the membrane. Residues 1538 to 1561 (NGWNVFDFIVVILSIGSLLFSAIL) form a helical membrane-spanning segment. Residues 1562 to 1573 (KSLENYFSPTLF) are Extracellular-facing. The chain crosses the membrane as a helical; Voltage-sensor span at residues 1574 to 1595 (RVIRLARIGRILRLIRAAKGIR). Topologically, residues 1596-1610 (TLLFALMMSLPALFN) are cytoplasmic. Residues 1611-1633 (IGLLLFLVMFIYSIFGMASFANV) form a helical membrane-spanning segment. Residues 1634–1647 (VDEAGIDDMFNFKT) lie on the Extracellular side of the membrane. Positions 1648–1670 (FGNSMLCLFQITTSAGWDGLLSP) form an intramembrane region, pore-forming. Residues 1671 to 1698 (ILNTGPPYCDPNLPNSNGSRGNCGSPAV) are Extracellular-facing. A glycan (N-linked (GlcNAc...) asparagine) is linked at asparagine 1687. A helical transmembrane segment spans residues 1699-1723 (GIIFFTTYIIISFLIVVNMYIAVIL). Over 1724-1956 (ENFNVATEES…AKEGNSPGPQ (233 aa)) the chain is Cytoplasmic. Residues 1852-1881 (EDLSATVIQKAYRSYMLHRSLTLSNTLHVP) enclose the IQ domain. Residues 1906-1956 (DKSETASATSFPPSYDSVTRGLSDRANINPSSSMQNEDEVAAKEGNSPGPQ) form a disordered region. Residues 1931-1940 (ANINPSSSMQ) are compositionally biased toward polar residues.

Belongs to the sodium channel (TC 1.A.1.10) family. Nav1.8/SCN10A subfamily. In terms of assembly, the channel consists of an ion conducting pore forming alpha-subunit regulated by one or more associated auxiliary subunits SCN1B, SCN2B and SCN3B; electrophysiological properties may vary depending on the type of the associated beta subunits. Found in a number of complexes with PRX, DYNLT1 and PDZD2. Interacts with proteins such as FSTL1, PRX, DYNLT1, PDZD2, S100A10 and many others. Interacts with NEDD4 and NEDD4L. In terms of processing, ubiquitinated by NEDD4L; which promotes its endocytosis. Post-translationally, phosphorylation at Ser-1452 by PKC in a highly conserved cytoplasmic loop slows inactivation of the sodium channel and reduces peak sodium currents. Lacks the cysteine which covalently binds the conotoxin GVIIJ. This cysteine (position 815) is speculated in other sodium channel subunits alpha to be implied in covalent binding with the sodium channel subunit beta-2 or beta-4. As to expression, expressed in dorsal root ganglia, trigeminal ganglia, nodose ganglia and sciatic nerve.

It localises to the cell membrane. The enzyme catalyses Na(+)(in) = Na(+)(out). In terms of biological role, tetrodotoxin-resistant channel that mediates the voltage-dependent sodium ion permeability of excitable membranes. Assuming opened or closed conformations in response to the voltage difference across the membrane, the protein forms a sodium-selective channel through which sodium ions may pass in accordance with their electrochemical gradient. Plays a role in neuropathic pain mechanisms. The polypeptide is Sodium channel protein type 10 subunit alpha (Rattus norvegicus (Rat)).